Consider the following 368-residue polypeptide: Anti-sigma-X factor RsiX (368 aa).

Positions 73-87 are enriched in polar residues; it reads QPQQKEASQENAVTK. The interval 73-101 is disordered; sequence QPQQKEASQENAVTKTETEDSPKAASSLD.

The protein localises to the cell membrane. The anti-sigma factor for extracytoplasmic function (ECF) sigma factor SigX, inhibits SigX activity and stabilizes it. This Bacillus subtilis (strain 168) protein is Anti-sigma-X factor RsiX (rsiX).